The primary structure comprises 496 residues: Guanosine-5'-triphosphate,3'-diphosphate pyrophosphatase (496 aa).

It belongs to the GppA/Ppx family. GppA subfamily.

It carries out the reaction guanosine 3'-diphosphate 5'-triphosphate + H2O = guanosine 3',5'-bis(diphosphate) + phosphate + H(+). The protein operates within purine metabolism; ppGpp biosynthesis; ppGpp from GTP: step 2/2. Functionally, catalyzes the conversion of pppGpp to ppGpp. Guanosine pentaphosphate (pppGpp) is a cytoplasmic signaling molecule which together with ppGpp controls the 'stringent response', an adaptive process that allows bacteria to respond to amino acid starvation, resulting in the coordinated regulation of numerous cellular activities. The sequence is that of Guanosine-5'-triphosphate,3'-diphosphate pyrophosphatase from Aeromonas hydrophila subsp. hydrophila (strain ATCC 7966 / DSM 30187 / BCRC 13018 / CCUG 14551 / JCM 1027 / KCTC 2358 / NCIMB 9240 / NCTC 8049).